Consider the following 103-residue polypeptide: Large ribosomal subunit protein bL21 (103 aa).

Belongs to the bacterial ribosomal protein bL21 family. As to quaternary structure, part of the 50S ribosomal subunit. Contacts protein L20.

Its function is as follows. This protein binds to 23S rRNA in the presence of protein L20. In Wigglesworthia glossinidia brevipalpis, this protein is Large ribosomal subunit protein bL21.